The primary structure comprises 432 residues: Adenylosuccinate synthetase 1 (432 aa).

Residues 12 to 18 and 40 to 42 each bind GTP; these read GDEGKGR and GHT. D13 serves as the catalytic Proton acceptor. 2 residues coordinate Mg(2+): D13 and G40. IMP contacts are provided by residues 13-16, 38-41, T128, R142, Q222, T237, and R301; these read DEGK and NAGH. The active-site Proton donor is the H41. 297-303 provides a ligand contact to substrate; that stretch reads TNTGRPR. Residues R303, 329 to 331, and 411 to 413 contribute to the GTP site; these read KLD and STG.

The protein belongs to the adenylosuccinate synthetase family. As to quaternary structure, homodimer. The cofactor is Mg(2+).

Its subcellular location is the cytoplasm. The catalysed reaction is IMP + L-aspartate + GTP = N(6)-(1,2-dicarboxyethyl)-AMP + GDP + phosphate + 2 H(+). It functions in the pathway purine metabolism; AMP biosynthesis via de novo pathway; AMP from IMP: step 1/2. In terms of biological role, plays an important role in the de novo pathway of purine nucleotide biosynthesis. Catalyzes the first committed step in the biosynthesis of AMP from IMP. The sequence is that of Adenylosuccinate synthetase 1 from Chromobacterium violaceum (strain ATCC 12472 / DSM 30191 / JCM 1249 / CCUG 213 / NBRC 12614 / NCIMB 9131 / NCTC 9757 / MK).